Reading from the N-terminus, the 749-residue chain is Homeobox-leucine zipper protein ROC7 (749 aa).

Positions 26-98 are disordered; it reads LDQHQQHQHQ…KKRYHRHTQH (73 aa). Residues 46-57 are compositionally biased toward basic and acidic residues; it reads SDGRAPRDELEM. A compositionally biased stretch (gly residues) spans 68–78; the sequence is SGGGGGGGGSG. Residues 86-97 are compositionally biased toward basic residues; the sequence is RPRKKRYHRHTQ. Positions 88 to 147 form a DNA-binding region, homeobox; the sequence is RKKRYHRHTQHQIQELEAFFKECPHPDDKQRKELSRELGLEPLQVKFWFQNKRTQMKTQH. Residues 137–218 are a coiled coil; it reads QNKRTQMKTQ…DRISAIAAKY (82 aa). An START domain is found at 256–494; that stretch reads ADFDKPLVIE…LERQCERLAS (239 aa).

This sequence belongs to the HD-ZIP homeobox family. Class IV subfamily.

Its subcellular location is the nucleus. Probable transcription factor. The sequence is that of Homeobox-leucine zipper protein ROC7 (ROC7) from Oryza sativa subsp. indica (Rice).